The following is a 99-amino-acid chain: Defensin-A4 (99 aa).

The N-terminal stretch at 1 to 21 (MKTLCLLFAVLCLVTWTQARG) is a signal peptide. Positions 22–68 (AEVEENLTAQDGEVDIAGDNGDVQLTLNTDDFESFTLKTLTLGHPRV) are excised as a propeptide. 3 disulfide bridges follow: cysteine 73–cysteine 97, cysteine 75–cysteine 89, and cysteine 79–cysteine 96.

It belongs to the alpha-defensin family. As to expression, lowly expressed in spleen, and expressed at lower levels in kidney and lung.

It localises to the secreted. Has antimicrobial activity. This chain is Defensin-A4, found in Ornithorhynchus anatinus (Duckbill platypus).